Here is a 730-residue protein sequence, read N- to C-terminus: ABC transporter G family member 3 (730 aa).

Low complexity predominate over residues 1-28 (MEEIQSQSDLYRSSSSSASSPTSRVPSS). The tract at residues 1–100 (MEEIQSQSDL…MASPPVPEGG (100 aa)) is disordered. Residues 47–56 (DSPEWEDTPD) are compositionally biased toward acidic residues. Residues 72-91 (NDATTTPVSPSLSKMNSGSM) are compositionally biased toward polar residues. Position 93 is a phosphoserine (serine 93). One can recognise an ABC transporter domain in the interval 114–356 (IAWKDLTVTM…FSNAGFPCPI (243 aa)). An ATP-binding site is contributed by 151 to 158 (GPAKSGKS). One can recognise an ABC transmembrane type-2 domain in the interval 441–653 (TRVAVLTWRS…SIEGLLENEY (213 aa)). A run of 6 helical transmembrane segments spans residues 465–485 (LILYMILTLSIGTLYSGLGHS), 495–515 (AVFVFVSFASLLGIAGIPSLL), 532–552 (AFVFLLGQFLGSIPFLFLMSI), 575–595 (VLNFFMCLLVNEGLMLFIACI), 600–620 (YWSTLTLISVHVIMMLAAGHF), and 689–709 (MLVLLAMAFGYRLLVYVLLRF).

The protein belongs to the ABC transporter superfamily. ABCG family. Eye pigment precursor importer (TC 3.A.1.204) subfamily.

It localises to the membrane. This Arabidopsis thaliana (Mouse-ear cress) protein is ABC transporter G family member 3 (ABCG3).